The primary structure comprises 212 residues: Probable GTP-binding protein EngB (212 aa).

In terms of domain architecture, EngB-type G spans 27–201 (GGIEIAFAGR…TRILSDWYQP (175 aa)). GTP is bound by residues 35 to 42 (GRSNAGKS), 62 to 66 (GRTQL), 80 to 83 (DLPG), 147 to 150 (TKAD), and 180 to 182 (FSS). Ser42 and Thr64 together coordinate Mg(2+).

It belongs to the TRAFAC class TrmE-Era-EngA-EngB-Septin-like GTPase superfamily. EngB GTPase family. The cofactor is Mg(2+).

Functionally, necessary for normal cell division and for the maintenance of normal septation. This chain is Probable GTP-binding protein EngB, found in Tolumonas auensis (strain DSM 9187 / NBRC 110442 / TA 4).